The following is a 941-amino-acid chain: RNA-binding protein 4F (941 aa).

Residues 1–13 (MDADKQLERQLEK) show a composition bias toward basic and acidic residues. The disordered stretch occupies residues 1–149 (MDADKQLERQ…DSDNAGGGNQ (149 aa)). Acidic residues predominate over residues 14 to 32 (ELDEMPAEDLDDDAYDEYD). Polar residues predominate over residues 42 to 52 (GSPQQGHSESP). S43 carries the phosphoserine modification. Positions 55-65 (EEEHKSEELRQ) are enriched in basic and acidic residues. The span at 87–98 (SSDDEPSVEETE) shows a compositional bias: acidic residues. A compositionally biased stretch (low complexity) spans 111–134 (DSSSSSDDVGVIEGSELESNSEVS). At S153 the chain carries Phosphoserine. The segment at 629–713 (RSRIKPNSQS…GPANAEAKES (85 aa)) is disordered. Positions 671 to 680 (EQQQQQQQQQ) are enriched in low complexity. S713 bears the Phosphoserine mark. Y717 is modified (phosphotyrosine). At S718 the chain carries Phosphoserine. The RRM domain maps to 724 to 801 (NKIFVRNLHP…MNISVAISNP (78 aa)). Basic and acidic residues-rich tracts occupy residues 862–902 (EANG…KGDD), 913–922 (QKGDEKKEEE), and 930–941 (SNDDFRKLFLKD). Residues 862 to 941 (EANGEEQKGD…DDFRKLFLKD (80 aa)) are disordered.

It localises to the cytoplasm. Functionally, may be involved in gene regulation during development. Binds RNA. This Drosophila melanogaster (Fruit fly) protein is RNA-binding protein 4F.